The sequence spans 709 residues: UvrABC system protein B (709 aa).

The Helicase ATP-binding domain occupies 35–416 (ERVEAGEKDV…YELGQADGYV (382 aa)). 48–55 (GATGTGKS) provides a ligand contact to ATP. Positions 101 to 124 (YYDYYQPEAYVPQTDTFIEKDSSI) match the Beta-hairpin motif. Residues 438–604 (QIDDLLEQIR…PLRKRIADIT (167 aa)) enclose the Helicase C-terminal domain. Residues 666-701 (ADLIEQMSQQMHQAAADLQFELAARLRDEVGELKKE) enclose the UVR domain.

Belongs to the UvrB family. Forms a heterotetramer with UvrA during the search for lesions. Interacts with UvrC in an incision complex.

It is found in the cytoplasm. In terms of biological role, the UvrABC repair system catalyzes the recognition and processing of DNA lesions. A damage recognition complex composed of 2 UvrA and 2 UvrB subunits scans DNA for abnormalities. Upon binding of the UvrA(2)B(2) complex to a putative damaged site, the DNA wraps around one UvrB monomer. DNA wrap is dependent on ATP binding by UvrB and probably causes local melting of the DNA helix, facilitating insertion of UvrB beta-hairpin between the DNA strands. Then UvrB probes one DNA strand for the presence of a lesion. If a lesion is found the UvrA subunits dissociate and the UvrB-DNA preincision complex is formed. This complex is subsequently bound by UvrC and the second UvrB is released. If no lesion is found, the DNA wraps around the other UvrB subunit that will check the other stand for damage. The chain is UvrABC system protein B from Micrococcus luteus (strain ATCC 4698 / DSM 20030 / JCM 1464 / CCM 169 / CCUG 5858 / IAM 1056 / NBRC 3333 / NCIMB 9278 / NCTC 2665 / VKM Ac-2230) (Micrococcus lysodeikticus).